A 354-amino-acid polypeptide reads, in one-letter code: MDDKKAGAGVSAEKQKALAAALSQIEKQFGKGSIMRLGDGEVEKDIQVVSTGSLGLDIALGVGGLPRGRVVEIYGPESSGKTTLTLQVVAEMQKLGGTCAFIDAEHALDVNYASKLGVNVGDLLISQPDTGEQALEITDALVRSGSIDLIIIDSVAALVPKAEIEGEMGDSLPGLQARLMSQALRKLTGTIKRTNCLVIFINQIRMKIGVMFGSPETTTGGNALKFYASVRLDIRRIGSIKKGDDVIGNETKVKVVKNKVSPPFREAFFDILYGQGISRQGEIIDLGVDAKIVEKSGAWYSYNGEKIGQGKDNAREYLRENPDIAAEIENKVRAALGVVAMNPTAAAVAATVED.

75–82 is a binding site for ATP; sequence GPESSGKT.

Belongs to the RecA family.

Its subcellular location is the cytoplasm. Functionally, can catalyze the hydrolysis of ATP in the presence of single-stranded DNA, the ATP-dependent uptake of single-stranded DNA by duplex DNA, and the ATP-dependent hybridization of homologous single-stranded DNAs. It interacts with LexA causing its activation and leading to its autocatalytic cleavage. This chain is Protein RecA, found in Cupriavidus taiwanensis (strain DSM 17343 / BCRC 17206 / CCUG 44338 / CIP 107171 / LMG 19424 / R1) (Ralstonia taiwanensis (strain LMG 19424)).